Consider the following 142-residue polypeptide: MKTFTAKPETVKRDWYVVDANGKTLGRLATELARRLRGKHKAEYTPHVDTGDYIIVLNADKVAVTGNKRTDKIYYHHTGHIGGIKQATFEEMIARRPERVIEIAVKGMLPKGPLGRAMFRKLKVYAGTEHNHAAQQPQVLDI.

The protein belongs to the universal ribosomal protein uL13 family. Part of the 50S ribosomal subunit.

Its function is as follows. This protein is one of the early assembly proteins of the 50S ribosomal subunit, although it is not seen to bind rRNA by itself. It is important during the early stages of 50S assembly. The protein is Large ribosomal subunit protein uL13 of Pectobacterium atrosepticum (strain SCRI 1043 / ATCC BAA-672) (Erwinia carotovora subsp. atroseptica).